The primary structure comprises 380 residues: Epoxyqueuosine reductase (380 aa).

Catalysis depends on Asp134, which acts as the Proton donor. The 4Fe-4S ferredoxin-type 1 domain occupies 178-208 (FPPDKPIEDQCGGCTKCIDICPTGALIQGGQ). Residues Cys188, Cys191, Cys194, Cys198, Cys214, Cys240, Cys243, and Cys247 each coordinate [4Fe-4S] cluster. One can recognise a 4Fe-4S ferredoxin-type 2 domain in the interval 226–258 (PEEYRDKIGNRIYGCDTCQTVCPKNKGMDFHNH).

Belongs to the QueG family. In terms of assembly, monomer. The cofactor is cob(II)alamin. Requires [4Fe-4S] cluster as cofactor.

The protein localises to the cytoplasm. It catalyses the reaction epoxyqueuosine(34) in tRNA + AH2 = queuosine(34) in tRNA + A + H2O. Its pathway is tRNA modification; tRNA-queuosine biosynthesis. Functionally, catalyzes the conversion of epoxyqueuosine (oQ) to queuosine (Q), which is a hypermodified base found in the wobble positions of tRNA(Asp), tRNA(Asn), tRNA(His) and tRNA(Tyr). The chain is Epoxyqueuosine reductase from Bacillus cereus (strain ATCC 14579 / DSM 31 / CCUG 7414 / JCM 2152 / NBRC 15305 / NCIMB 9373 / NCTC 2599 / NRRL B-3711).